The chain runs to 166 residues: Ferric nitrobindin-like protein (166 aa).

The GXWXGXG motif lies at 21–27 (GHWEGEG).

This sequence belongs to the nitrobindin family.

This chain is Ferric nitrobindin-like protein, found in Cutibacterium acnes (strain DSM 16379 / KPA171202) (Propionibacterium acnes).